The primary structure comprises 187 residues: Dihydrofolate reductase type A10 (187 aa).

Residues 2–174 (NISLIFANEL…YSLSIDKFVR (173 aa)) form the DHFR domain.

It belongs to the dihydrofolate reductase family. Homodimer.

The enzyme catalyses (6S)-5,6,7,8-tetrahydrofolate + NADP(+) = 7,8-dihydrofolate + NADPH + H(+). Its pathway is cofactor biosynthesis; tetrahydrofolate biosynthesis; 5,6,7,8-tetrahydrofolate from 7,8-dihydrofolate: step 1/1. Functionally, key enzyme in folate metabolism. Catalyzes an essential reaction for de novo glycine and purine synthesis, and for DNA precursor synthesis. The polypeptide is Dihydrofolate reductase type A10 (dfrA10) (Escherichia coli).